Reading from the N-terminus, the 61-residue chain is Large ribosomal subunit protein uL30 (61 aa).

This sequence belongs to the universal ribosomal protein uL30 family. As to quaternary structure, part of the 50S ribosomal subunit.

This is Large ribosomal subunit protein uL30 from Neisseria gonorrhoeae (strain ATCC 700825 / FA 1090).